The chain runs to 412 residues: FAD-dependent monooxygenase nscC (412 aa).

A signal peptide spans 1–21 (MGKPQETILIIGAGIAGLTAS). Positions 35 and 46 each coordinate FAD. 2 N-linked (GlcNAc...) asparagine glycosylation sites follow: N68 and N92. FAD is bound at residue R119. N-linked (GlcNAc...) asparagine glycosylation is found at N170, N231, and N251. D326 and G339 together coordinate FAD.

Belongs to the paxM FAD-dependent monooxygenase family. It depends on FAD as a cofactor.

The protein operates within secondary metabolite biosynthesis. Its function is as follows. FAD-dependent monooxygenase; part of the gene cluster that mediates the biosynthesis of neosartoricin B, a prenylated anthracenone that probably exhibits T-cell antiproliferative activity, suggestive of a physiological role as an immunosuppressive agent. The non-reducing polyketide synthase nscA probably synthesizes and cyclizes the decaketide backbone. The hydrolase nscB then mediates the product release through hydrolysis followed by spontaneous decarboxylation. The prenyltransferase nscD catalyzes the addition of the dimethylallyl group to the aromatic C5. The FAD-dependent monooxygenase nscC is then responsible for the stereospecific hydroxylation at C2. Neosartoricin B can be converted into two additional compounds neosartoricins C and D. Neosartoricin C is a spirocyclic compound that is cyclized through the attack of C3 hydroxyl on C14, followed by dehydration. On the other hand, neosartoricin D is a further cyclized compound in which attack of C2 on C14 in neosartoricin C results in the formation of the acetal-containing dioxabicyclo-octanone ring. Both of these compounds are novel and possibly represent related metabolites of the gene cluster. In Trichophyton rubrum (strain ATCC MYA-4607 / CBS 118892) (Athlete's foot fungus), this protein is FAD-dependent monooxygenase nscC.